Reading from the N-terminus, the 392-residue chain is V-type proton ATPase subunit C (392 aa).

Ala-2 carries the N-acetylalanine modification.

The protein belongs to the V-ATPase C subunit family. As to quaternary structure, V-ATPase is a heteromultimeric enzyme composed of a peripheral catalytic V1 complex (components A to H) attached to an integral membrane V0 proton pore complex (components: a, c, c', c'', d, e, f and VOA1). Interacts directly with VMA4.

The protein localises to the vacuole membrane. Subunit of the V1 complex of vacuolar(H+)-ATPase (V-ATPase), a multisubunit enzyme composed of a peripheral complex (V1) that hydrolyzes ATP and a membrane integral complex (V0) that translocates protons. V-ATPase is responsible for acidifying and maintaining the pH of intracellular compartments. Subunit C is necessary for the assembly of the catalytic sector of the enzyme and is likely to have a specific function in its catalytic activity. Reversibly leaves the enzyme after glucose depletion, causing the catalytic subcomplex V1 to detach from the V0 section. The sequence is that of V-type proton ATPase subunit C from Saccharomyces cerevisiae (strain ATCC 204508 / S288c) (Baker's yeast).